Here is a 281-residue protein sequence, read N- to C-terminus: MKQFSAKFALALSAAAGQALAASTQGISEDLYNRLVEMATISQAAYANMCNIPSTITVGEKIYNAQTDINGWVLRDDSTKEIITVFRGTGSDTNLQLDTNYTLTPFSTFSECSGCEVHGGYFIGWSSVQDQVMSLVKEQADQYPDYTLTVTGHSLGASMATLAAAQLSGTYDNITLYTFGEPRSGNEAFASYMNDKFTATSADTTKYFRVTHSNDGIPNLPPAEQGYVHGGVEYWSVDPYSAQNTYVCTGDEVQCCEAQGGQGVNDAHTTYFGMTSGACTW.

A signal peptide spans Met1–Ala21. Disulfide bonds link Cys50/Cys279, Cys112/Cys115, and Cys248/Cys255. Substrate is bound at residue Asp98. Residue Asn100 is glycosylated (N-linked (GlcNAc...) asparagine). Tyr101 contributes to the substrate binding site. Ser154 (nucleophile) is an active-site residue. The N-linked (GlcNAc...) asparagine glycan is linked to Asn173. Asp215 functions as the Charge relay system in the catalytic mechanism. His268 serves as a coordination point for substrate. The active-site Charge relay system is His268.

The protein belongs to the AB hydrolase superfamily. FaeA family.

Its subcellular location is the secreted. The catalysed reaction is feruloyl-polysaccharide + H2O = ferulate + polysaccharide.. In terms of biological role, involved in degradation of plant cell walls. Hydrolyzes the feruloyl-arabinose ester bond in arabinoxylans, and the feruloyl-galactose ester bond in pectin. This is Probable feruloyl esterase A (faeA) from Aspergillus terreus (strain NIH 2624 / FGSC A1156).